We begin with the raw amino-acid sequence, 375 residues long: Growth/differentiation factor 8 (375 aa).

Positions methionine 1–leucine 23 are cleaved as a signal peptide. Residues aspartate 24–arginine 266 constitute a propeptide that is removed on maturation. Asparagine 71 carries N-linked (GlcNAc...) asparagine glycosylation. Intrachain disulfides connect cysteine 272–cysteine 282, cysteine 281–cysteine 340, cysteine 309–cysteine 372, and cysteine 313–cysteine 374.

Belongs to the TGF-beta family. As to quaternary structure, homodimer; disulfide-linked.

The protein resides in the secreted. Acts specifically as a negative regulator of skeletal muscle growth. This is Growth/differentiation factor 8 (MSTN) from Coturnix coturnix (Common quail).